The chain runs to 230 residues: Acyl-coenzyme A thioesterase THEM4 (230 aa).

The N-terminal 27 residues, 1 to 27 (MLRNCAMRLRTLGATPARRPGAARRLF), are a transit peptide targeting the mitochondrion. 2 positions are modified to phosphoserine: S28 and S29. An N6-succinyllysine mark is found at K46 and K57. Position 65 is an N6-acetyllysine (K65). 2 positions are modified to N6-succinyllysine: K89 and K98. D152 functions as the Proton donor/acceptor in the catalytic mechanism. Substrate-binding positions include K175 and 196 to 197 (RK). K197 is subject to N6-succinyllysine.

Belongs to the THEM4/THEM5 thioesterase family. As to quaternary structure, homodimer and homotetramer. Interacts with AKT1 in the cytosol. In terms of assembly, (Microbial infection) Interacts with V-AKT from AKT8 murine leukemia virus. In terms of processing, phosphorylated.

It localises to the cell membrane. The protein resides in the cell projection. The protein localises to the ruffle membrane. It is found in the cytoplasm. Its subcellular location is the mitochondrion. It localises to the mitochondrion inner membrane. The protein resides in the mitochondrion intermembrane space. The catalysed reaction is hexadecanoyl-CoA + H2O = hexadecanoate + CoA + H(+). It catalyses the reaction octanoyl-CoA + H2O = octanoate + CoA + H(+). It carries out the reaction decanoyl-CoA + H2O = decanoate + CoA + H(+). The enzyme catalyses dodecanoyl-CoA + H2O = dodecanoate + CoA + H(+). The catalysed reaction is tetradecanoyl-CoA + H2O = tetradecanoate + CoA + H(+). It catalyses the reaction (9Z)-octadecenoyl-CoA + H2O = (9Z)-octadecenoate + CoA + H(+). It carries out the reaction (5Z,8Z,11Z,14Z)-eicosatetraenoyl-CoA + H2O = (5Z,8Z,11Z,14Z)-eicosatetraenoate + CoA + H(+). Has acyl-CoA thioesterase activity towards medium and long-chain (C14 to C18) fatty acyl-CoA substrates, and probably plays a role in mitochondrial fatty acid metabolism. Plays a role in the apoptotic process, possibly via its regulation of AKT1 activity. This Mus musculus (Mouse) protein is Acyl-coenzyme A thioesterase THEM4 (Them4).